We begin with the raw amino-acid sequence, 508 residues long: Glycogen synthase (508 aa).

K15 contacts ADP-alpha-D-glucose. The segment at 483 to 508 is disordered; that stretch reads ARNRAETRPQTASALSYREPRPAAEY.

It belongs to the glycosyltransferase 1 family. Bacterial/plant glycogen synthase subfamily.

The catalysed reaction is [(1-&gt;4)-alpha-D-glucosyl](n) + ADP-alpha-D-glucose = [(1-&gt;4)-alpha-D-glucosyl](n+1) + ADP + H(+). The protein operates within glycan biosynthesis; glycogen biosynthesis. Its function is as follows. Synthesizes alpha-1,4-glucan chains using ADP-glucose. The polypeptide is Glycogen synthase (Paracidovorax citrulli (strain AAC00-1) (Acidovorax citrulli)).